Here is a 93-residue protein sequence, read N- to C-terminus: Protein F-93 (93 aa).

As to quaternary structure, homodimer.

Probable transcription factor that recognizes a (pseudo-)palindromic DNA target sequence. The protein is Protein F-93 of Saccharolobus solfataricus (Sulfolobus solfataricus).